Reading from the N-terminus, the 448-residue chain is Dual specificity mitogen-activated protein kinase kinase 5 (448 aa).

An interaction with MAPK7 region spans residues 18-25 (VIRIKIPN). The PB1 domain occupies 18 to 109 (VIRIKIPNSG…EPLQIFPRAC (92 aa)). The tract at residues 64-68 (DEDGD) is interaction with MAP3K2/MAP3K3. Residues 116–144 (NIHGLKVNTRAGPSQHTSPVVSDSLPSNS) form a disordered region. The segment at 117 to 131 (IHGLKVNTRAGPSQH) is interaction with MAPK7. A compositionally biased stretch (polar residues) spans 126–144 (AGPSQHTSPVVSDSLPSNS). The region spanning 166–419 (IRYRDTLGHG…PEELMGHPFI (254 aa)) is the Protein kinase domain. ATP contacts are provided by residues 172 to 180 (LGHGNGGTV) and lysine 195. The active-site Proton acceptor is aspartate 283. Phosphoserine is present on serine 311. Threonine 315 carries the post-translational modification Phosphothreonine.

This sequence belongs to the protein kinase superfamily. STE Ser/Thr protein kinase family. MAP kinase kinase subfamily. Interacts with PARD6A, MAP3K3 and MAPK7. Forms a complex with SQSTM1 and PRKCZ or PRKCI. It depends on Mg(2+) as a cofactor. In terms of processing, activated by phosphorylation on Ser/Thr by MAP kinase kinase kinases.

It is found in the cytoplasm. The catalysed reaction is L-seryl-[protein] + ATP = O-phospho-L-seryl-[protein] + ADP + H(+). It carries out the reaction L-threonyl-[protein] + ATP = O-phospho-L-threonyl-[protein] + ADP + H(+). The enzyme catalyses L-tyrosyl-[protein] + ATP = O-phospho-L-tyrosyl-[protein] + ADP + H(+). Its function is as follows. Acts as a scaffold for the formation of a ternary MAP3K2/MAP3K3-MAP3K5-MAPK7 signaling complex. Activation of this pathway appears to play a critical role in protecting cells from stress-induced apoptosis, neuronal survival and cardiac development and angiogenesis. As part of the MAPK/ERK signaling pathway, acts as a negative regulator of apoptosis in cardiomyocytes via promotion of STUB1/CHIP-mediated ubiquitination and degradation of ICER-type isoforms of CREM. This Mus musculus (Mouse) protein is Dual specificity mitogen-activated protein kinase kinase 5 (Map2k5).